The primary structure comprises 277 residues: Phosphatidylglycerol--prolipoprotein diacylglyceryl transferase (277 aa).

A run of 4 helical transmembrane segments spans residues I18 to A38, I51 to Y71, I89 to I109, and I116 to G136. R137 is an a 1,2-diacyl-sn-glycero-3-phospho-(1'-sn-glycerol) binding site. The next 3 membrane-spanning stretches (helical) occupy residues Q177–I197, G205–M225, and F235–Y255.

It belongs to the Lgt family.

It is found in the cell membrane. It catalyses the reaction L-cysteinyl-[prolipoprotein] + a 1,2-diacyl-sn-glycero-3-phospho-(1'-sn-glycerol) = an S-1,2-diacyl-sn-glyceryl-L-cysteinyl-[prolipoprotein] + sn-glycerol 1-phosphate + H(+). Its pathway is protein modification; lipoprotein biosynthesis (diacylglyceryl transfer). Its function is as follows. Catalyzes the transfer of the diacylglyceryl group from phosphatidylglycerol to the sulfhydryl group of the N-terminal cysteine of a prolipoprotein, the first step in the formation of mature lipoproteins. The polypeptide is Phosphatidylglycerol--prolipoprotein diacylglyceryl transferase (Listeria monocytogenes serotype 4b (strain CLIP80459)).